The primary structure comprises 882 residues: Homeobox-leucine zipper protein ROC3 (882 aa).

Residues 104–144 (DVDDDHKPQHSGHDQPPDAAQPSGAAGGNAKKKRYHRHTAH) are disordered. The segment covering 107–119 (DDHKPQHSGHDQP) has biased composition (basic and acidic residues). Over residues 133-143 (AKKKRYHRHTA) the composition is skewed to basic residues. The homeobox DNA-binding region spans 134–193 (KKKRYHRHTAHQIQQMEALFKECPHPDDKQRLKLSQELGLKPRQVKFWFQNRRTQMKAQQ). Residues 200 to 263 (ILRAENENLK…LDRLACIATR (64 aa)) are a coiled coil. Residues 340 to 584 (QEQDKQLVVD…LQRQCERLAS (245 aa)) form the START domain. The segment covering 782-816 (AAAPTISSSTTTTTGNGNGETSSTPPRNSSSNNNN) has biased composition (low complexity). A disordered region spans residues 782–820 (AAAPTISSSTTTTTGNGNGETSSTPPRNSSSNNNNADEL).

The protein belongs to the HD-ZIP homeobox family. Class IV subfamily.

The protein resides in the nucleus. Its function is as follows. Probable transcription factor. This chain is Homeobox-leucine zipper protein ROC3 (ROC3), found in Oryza sativa subsp. japonica (Rice).